Reading from the N-terminus, the 421-residue chain is Serine hydroxymethyltransferase (421 aa).

(6S)-5,6,7,8-tetrahydrofolate contacts are provided by residues leucine 121 and 125-127 (GHL). At lysine 229 the chain carries N6-(pyridoxal phosphate)lysine.

It belongs to the SHMT family. As to quaternary structure, homodimer. Pyridoxal 5'-phosphate is required as a cofactor.

Its subcellular location is the cytoplasm. The catalysed reaction is (6R)-5,10-methylene-5,6,7,8-tetrahydrofolate + glycine + H2O = (6S)-5,6,7,8-tetrahydrofolate + L-serine. It participates in one-carbon metabolism; tetrahydrofolate interconversion. Its pathway is amino-acid biosynthesis; glycine biosynthesis; glycine from L-serine: step 1/1. Catalyzes the reversible interconversion of serine and glycine with tetrahydrofolate (THF) serving as the one-carbon carrier. This reaction serves as the major source of one-carbon groups required for the biosynthesis of purines, thymidylate, methionine, and other important biomolecules. Also exhibits THF-independent aldolase activity toward beta-hydroxyamino acids, producing glycine and aldehydes, via a retro-aldol mechanism. This chain is Serine hydroxymethyltransferase, found in Actinobacillus pleuropneumoniae serotype 5b (strain L20).